The sequence spans 630 residues: Very-long-chain aldehyde decarbonylase GL1-7 (630 aa).

Helical transmembrane passes span 93-113 (LYLD…YAII), 126-146 (GALI…YWFH), 185-205 (FLLF…SVLA), and 325-345 (VWYM…AWIY). A Fatty acid hydroxylase domain is found at 133–272 (LHMGPVEFLY…MPFYDYIYNT (140 aa)).

Belongs to the sterol desaturase family. Homodimer. As to expression, expressed in panicles at low levels.

It localises to the endoplasmic reticulum membrane. The catalysed reaction is a long-chain fatty aldehyde + 2 NADPH + O2 + H(+) = a long-chain alkane + formate + 2 NADP(+) + H2O. Its function is as follows. Aldehyde decarbonylase involved in the conversion of aldehydes to alkanes. Core component of a very-long-chain alkane synthesis complex. This is Very-long-chain aldehyde decarbonylase GL1-7 from Oryza sativa subsp. japonica (Rice).